Reading from the N-terminus, the 470-residue chain is Amino-acid permease RocC (470 aa).

The next 12 membrane-spanning stretches (helical) occupy residues 18 to 38, 44 to 64, 90 to 110, 119 to 139, 159 to 179, 196 to 216, 243 to 263, 281 to 301, 338 to 358, 360 to 380, 409 to 429, and 433 to 453; these read FMIA…GFTI, LGAI…MLCL, GFMI…LELT, WLPS…IFLI, VAAI…LIDF, GLFP…NFSF, VIWR…AILP, IGIP…ILSV, ALLI…MAAE, VYLW…MSIC, LVPI…IFIP, and IGLY…HLSI.

It belongs to the amino acid-polyamine-organocation (APC) superfamily.

It localises to the cell membrane. Putative transport protein involved in arginine degradative pathway. Probably transports arginine or ornithine. This Bacillus subtilis (strain 168) protein is Amino-acid permease RocC (rocC).